The chain runs to 266 residues: Interleukin-1 beta (266 aa).

Residues 1–113 (MATVPEPTNE…ETYDDDLLCD (113 aa)) constitute a propeptide that is removed on maturation.

This sequence belongs to the IL-1 family. As to quaternary structure, monomer. In its precursor form, weakly interacts with full-length MEFV; the mature cytokine does not interact at all. Interacts with integrins ITGAV:ITGBV and ITGA5:ITGB1; integrin-binding is required for IL1B signaling. Interacts with cargo receptor TMED10; the interaction is direct and is required for the secretion of IL1B mature form. Interacts with HSP90AB1; the interaction facilitates cargo translocation into the ERGIC. Interacts with HSP90B1; the interaction facilitates cargo translocation into the ERGIC.

The protein resides in the cytoplasm. The protein localises to the cytosol. It localises to the secreted. Its subcellular location is the lysosome. It is found in the extracellular exosome. Its function is as follows. Potent pro-inflammatory cytokine. Initially discovered as the major endogenous pyrogen, induces prostaglandin synthesis, neutrophil influx and activation, T-cell activation and cytokine production, B-cell activation and antibody production, and fibroblast proliferation and collagen production. Promotes Th17 differentiation of T-cells. Synergizes with IL12/interleukin-12 to induce IFNG synthesis from T-helper 1 (Th1) cells. Plays a role in angiogenesis by inducing VEGF production synergistically with TNF and IL6. Involved in transduction of inflammation downstream of pyroptosis: its mature form is specifically released in the extracellular milieu by passing through the gasdermin-D (GSDMD) pore. This Delphinapterus leucas (Beluga whale) protein is Interleukin-1 beta (IL1B).